Here is a 185-residue protein sequence, read N- to C-terminus: Ribosome-recycling factor (185 aa).

The protein belongs to the RRF family.

The protein resides in the cytoplasm. Responsible for the release of ribosomes from messenger RNA at the termination of protein biosynthesis. May increase the efficiency of translation by recycling ribosomes from one round of translation to another. This Shouchella clausii (strain KSM-K16) (Alkalihalobacillus clausii) protein is Ribosome-recycling factor.